The sequence spans 211 residues: Type II secretion system protein J (211 aa).

A propeptide spans 1-7 (MRPRAAG) (leader sequence). Phe-8 is modified (N-methylphenylalanine). Residues 8 to 28 (FTLIEVLLATMLLVGGLALAF) traverse the membrane as a helical segment.

The protein belongs to the GSP J family.

The protein resides in the membrane. In terms of biological role, involved in a type II secretion system (T2SS, formerly general secretion pathway, GSP) for the export of proteins. In Xanthomonas campestris pv. campestris (strain ATCC 33913 / DSM 3586 / NCPPB 528 / LMG 568 / P 25), this protein is Type II secretion system protein J (xpsJ).